The sequence spans 229 residues: Allatostatin-A (229 aa).

Positions 1–18 (MLSTSLPVCFLVIGAALC) are cleaved as a signal peptide. Residues 19–48 (APERMQNDPDPHDSTAQGSDNHSDHIAPLA) constitute a propeptide that is removed on maturation. Residues 23–46 (MQNDPDPHDSTAQGSDNHSDHIAP) form a disordered region. The residue at position 58 (Leu-58) is a Leucine amide. The propeptide occupies 62-80 (AYSYVSEYKRLPVYNFGLG). A Leucine amide modification is found at Leu-90. Positions 94 to 130 (SVDEDQTNDDQQQIMNNDLDQAALAEFFDQYDDAGYE) are excised as a propeptide. A Leucine amide modification is found at Leu-140. Positions 144 to 152 (FADDDTSEE) are excised as a propeptide. 5 positions are modified to leucine amide: Leu-162, Leu-173, Leu-184, Leu-196, and Leu-210. Residues 214 to 229 (SADDASTEDSDNYFDV) constitute a propeptide that is removed on maturation.

The protein belongs to the allatostatin family. As to expression, allatostatin-A-1: Expressed in antennal lobe (AL), corpora cardiaca (CC), corpora allata (CA) and gnathal ganglion (GNG) (at protein level). Expression in AL and GNG detected in most animals, in CC and CA in some animals (at protein level). Allatostatin-A-3: Expressed in antennal lobe (AL), corpora cardiaca (CC), corpora allata (CA) and gnathal ganglion (GNG) (at protein level). Expression in AL detected in all animals, in GNG, CC and CA in most animals (at protein level). Allatostatin-A-4: Expressed in antennal lobe (AL), corpora cardiaca (CC), corpora allata (CA) and gnathal ganglion (GNG) in all animals (at protein level). Allatostatin-A-5: Expressed in antennal lobe (AL), corpora cardiaca (CC), corpora allata (CA) and gnathal ganglion (GNG) in all animals (at protein level). Allatostatin-A-6: Expressed in antennal lobe (AL) and gnathal ganglion (GNG) (at protein level). Expression in AL detected in some animals, in GNG in few animals (at protein level). Not expressed in corpora cardiaca (CC) and corpora allata (CA) (at protein level). Allatostatin-A-7: Expressed in antennal lobe (AL), corpora cardiaca (CC), corpora allata (CA) and gnathal ganglion (GNG) (at protein level). Expression in AL detected in all animals, in GNG, CC and CA in most animals (at protein level). Allatostatin-A-8: Expressed in antennal lobe (AL), corpora cardiaca (CC), corpora allata (CA) and gnathal ganglion (GNG) (at protein level). Expression in AL detected in all animals, in GNG, CC and CA in most animals (at protein level). Allatostatin-A-9: Expressed in antennal lobe (AL), corpora cardiaca (CC), corpora allata (CA) and gnathal ganglion (GNG) (at protein level). Expression in AL detected in all animals, in GNG in most animals and in CC and CA in some animals (at protein level).

It localises to the secreted. Its function is as follows. Neuropeptide inhibitors of juvenile hormone synthesis and gut muscle contraction. This is Allatostatin-A from Agrotis ipsilon (Black cutworm moth).